Consider the following 124-residue polypeptide: Small ribosomal subunit protein uS12 (124 aa).

The interval 1-42 (MPTTQQLIRKGRKTEEETSDAPALEGSPQRRGVCTRVYTTTP) is disordered. Aspartate 89 carries the post-translational modification 3-methylthioaspartic acid. The disordered stretch occupies residues 105-124 (AGVEERRQGRSKYGTKKPRE). The span at 113 to 124 (GRSKYGTKKPRE) shows a compositional bias: basic residues.

This sequence belongs to the universal ribosomal protein uS12 family. In terms of assembly, part of the 30S ribosomal subunit. Contacts proteins S8 and S17. May interact with IF1 in the 30S initiation complex.

In terms of biological role, with S4 and S5 plays an important role in translational accuracy. Functionally, interacts with and stabilizes bases of the 16S rRNA that are involved in tRNA selection in the A site and with the mRNA backbone. Located at the interface of the 30S and 50S subunits, it traverses the body of the 30S subunit contacting proteins on the other side and probably holding the rRNA structure together. The combined cluster of proteins S8, S12 and S17 appears to hold together the shoulder and platform of the 30S subunit. The sequence is that of Small ribosomal subunit protein uS12 from Salinibacter ruber (strain DSM 13855 / M31).